We begin with the raw amino-acid sequence, 877 residues long: Oligopeptide transporter 2 (877 aa).

The Cytoplasmic portion of the chain corresponds to 1 to 167 (MSETVKDKVI…DPTIPVETFR (167 aa)). Residues 168-188 (AYFLAIIWSVIGSGFNEFFSH) form a helical membrane-spanning segment. Residue arginine 189 is a topological domain, extracellular. Residues 190-210 (VVSISLNTPIIQMFLYICGKA) form a helical membrane-spanning segment. The Cytoplasmic portion of the chain corresponds to 211–240 (WAKTIPCWTITIRGRKYGINIDKPWTQKEQ). Residues 241–261 (MFSTLLYAICQGAFYTHYNIL) form a helical membrane-spanning segment. At 262-272 (TQKLFYHSAFS) the chain is on the extracellular side. A helical transmembrane segment spans residues 273-293 (FGYQFLLSLSVQFIGFGFAGI). The Cytoplasmic segment spans residues 294-334 (LRKFVVYPARALWPTVMPTIAINKALLGKEKHESGMSRYKF). A helical membrane pass occupies residues 335-355 (FFLTFFIMFIYNWFPTYIINI). The Extracellular portion of the chain corresponds to 356–374 (LNTFNWMTWIKPSNINLAN). Asparagine 374 is a glycosylation site (N-linked (GlcNAc...) asparagine). The chain crosses the membrane as a helical span at residues 375–395 (ITGGVTGLGINPISSFDWNVI). Topologically, residues 396 to 404 (SFNSPLVYP) are cytoplasmic. Residues 405-425 (FWSYLTQYLGCILAALIVIAV) form a helical membrane-spanning segment. Over 426 to 480 (YYSNYMSCQYLPIFTNSLYTNTGHSFKVTEVLDSDNKLDVKKYQSYSPPYYSAGN) the chain is Extracellular. Residues 481 to 501 (LVSYGAFICAYPLMITWSFIV) traverse the membrane as a helical segment. Residues 502–553 (HSKLLFNAFKDWALNLWAMRKLKSWVTMFKSDYRALDDYDDPHSNAMKNYKE) lie on the Cytoplasmic side of the membrane. A helical transmembrane segment spans residues 554–574 (VPDWWYFAILIGSLVVGIAVV). Over 575-582 (EHYPTNTP) the chain is Extracellular. Residues 583–603 (VWGLFVCLGFNFVFLIPTTIL) form a helical membrane-spanning segment. The Cytoplasmic segment spans residues 604 to 614 (QATTGYSFGLN). The helical transmembrane segment at 615–635 (LLIEMVMGYALPGNPIAIMIL) threads the bilayer. Topologically, residues 636–671 (KAFGYNIDGQADNYVSNLKIAHYCKIPPMALFRGQC) are extracellular. A helical membrane pass occupies residues 672–692 (VIVFIQIFVNLGVLNWQISNI). Residues 693–730 (KDFCTPHQNAKFTCPDAVTYYNASVVWGAIGPKRIFNY) lie on the Cytoplasmic side of the membrane. A helical membrane pass occupies residues 731 to 751 (IYPIFKWCWLIGACIGIFFGV). The Extracellular segment spans residues 752-766 (WKRWGKFYPRYFDPM). The chain crosses the membrane as a helical span at residues 767-789 (LFVGGMLNMSPPYNLMYYTSGMI). The Cytoplasmic segment spans residues 790–811 (VSYISQYYMKRHHLNLWEKYNY). Residues 812–832 (VLSAGFSTGLVLSAIIIFFAV) form a helical membrane-spanning segment. Residues 833-877 (QYKDTAFNWWGNTVPYAGADGVGYPLKNITDTANGYFGYAPGHYP) lie on the Extracellular side of the membrane. Asparagine 860 carries an N-linked (GlcNAc...) asparagine glycan.

Belongs to the oligopeptide OPT transporter family.

The protein localises to the membrane. Transports tetra- and pentapeptides. Does not transport glutathione. The polypeptide is Oligopeptide transporter 2 (OPT2) (Saccharomyces cerevisiae (strain ATCC 204508 / S288c) (Baker's yeast)).